Consider the following 261-residue polypeptide: Carnitinyl-CoA dehydratase (261 aa).

Catalysis depends on Glu-111, which acts as the Nucleophile. Glu-131 acts as the Proton acceptor in catalysis.

Belongs to the enoyl-CoA hydratase/isomerase family.

It carries out the reaction (R)-carnitinyl-CoA = crotonobetainyl-CoA + H2O. The protein operates within amine and polyamine metabolism; carnitine metabolism. Functionally, catalyzes the reversible dehydration of L-carnitinyl-CoA to crotonobetainyl-CoA. This Salmonella enteritidis PT4 (strain P125109) protein is Carnitinyl-CoA dehydratase.